Consider the following 343-residue polypeptide: NADP-dependent alkenal double bond reductase P2 (343 aa).

Substrate contacts are provided by Y52 and Y79. NADP(+) is bound by residues 164–167 (GAVG), K190, Y206, N230, 252–258 (CGMISQY), 282–284 (FVV), and N332.

Belongs to the NADP-dependent oxidoreductase L4BD family. Homodimer.

It carries out the reaction an n-alkanal + NAD(+) = an alk-2-enal + NADH + H(+). The enzyme catalyses an n-alkanal + NADP(+) = an alk-2-enal + NADPH + H(+). In terms of biological role, catalyzes the reduction of the 7-8 double bond of phenylpropanal substrates, such as p-coumaryl aldehyde and coniferyl aldehyde (in vitro). Has activity towards toxic substrates, such as 4-hydroxy-(2E)-nonenal (in vitro). May play a distinct role in plant antioxidant defense and is possibly involved in NAD(P)/NAD(P)h homeostasis. This Arabidopsis thaliana (Mouse-ear cress) protein is NADP-dependent alkenal double bond reductase P2 (P2).